We begin with the raw amino-acid sequence, 395 residues long: MAKAKFERTKPHCNIGTIGHVDHGKTSLTAAITKVLAESGGATFRAYDSIDAAPEERARGITIATAHVEYETANRHYAHVDCPGHADYVKNMITGAAQMDGAILVVSAADGPMPQTREHILLARQVGVPALVVFLNKMDMADPDLVELVEMEVRDLLSKYEFPGDDIPIIKGSALCALEDSNAELGREAILKLMEAVDSYIPQPERPKDKPFLMPVEDVFSISGRGTVVTGRVERGIIKVGDEVEIVGLKATVKTTVTGVEMFRKLLDQGEAGDNIGALLRGTKREDVERGQVLAAPGSITPHTNFSGSVYILNKEEGGRHTPFFTNYRPQFYFRTTDVTGVVTLPEGVEMVMPGDNVTVSVELIAPIAMDEGLRFAIREGGRTVGSGVVASITK.

The region spanning 10–205 is the tr-type G domain; sequence KPHCNIGTIG…AVDSYIPQPE (196 aa). The interval 19–26 is G1; sequence GHVDHGKT. 19–26 lines the GTP pocket; it reads GHVDHGKT. Position 26 (T26) interacts with Mg(2+). The G2 stretch occupies residues 60–64; sequence GITIA. The G3 stretch occupies residues 81–84; that stretch reads DCPG. Residues 81–85 and 136–139 each bind GTP; these read DCPGH and NKMD. A G4 region spans residues 136–139; sequence NKMD. Residues 173–175 are G5; it reads SAL.

Belongs to the TRAFAC class translation factor GTPase superfamily. Classic translation factor GTPase family. EF-Tu/EF-1A subfamily. Monomer.

It is found in the cytoplasm. The enzyme catalyses GTP + H2O = GDP + phosphate + H(+). In terms of biological role, GTP hydrolase that promotes the GTP-dependent binding of aminoacyl-tRNA to the A-site of ribosomes during protein biosynthesis. The polypeptide is Elongation factor Tu (Acidiphilium cryptum (strain JF-5)).